We begin with the raw amino-acid sequence, 304 residues long: Acetyl-coenzyme A carboxylase carboxyl transferase subunit beta (304 aa).

Positions 23-292 (VWTKCDSCGQ…PNPEAPREGV (270 aa)) constitute a CoA carboxyltransferase N-terminal domain. Zn(2+)-binding residues include cysteine 27, cysteine 30, cysteine 46, and cysteine 49. The C4-type zinc-finger motif lies at 27-49 (CDSCGQVLYRAELERNLEVCPKC). Positions 285-304 (PEAPREGVVVPPVPDQEPEA) are disordered. Over residues 295 to 304 (PPVPDQEPEA) the composition is skewed to pro residues.

This sequence belongs to the AccD/PCCB family. Acetyl-CoA carboxylase is a heterohexamer composed of biotin carboxyl carrier protein (AccB), biotin carboxylase (AccC) and two subunits each of ACCase subunit alpha (AccA) and ACCase subunit beta (AccD). It depends on Zn(2+) as a cofactor.

The protein localises to the cytoplasm. The catalysed reaction is N(6)-carboxybiotinyl-L-lysyl-[protein] + acetyl-CoA = N(6)-biotinyl-L-lysyl-[protein] + malonyl-CoA. It participates in lipid metabolism; malonyl-CoA biosynthesis; malonyl-CoA from acetyl-CoA: step 1/1. In terms of biological role, component of the acetyl coenzyme A carboxylase (ACC) complex. Biotin carboxylase (BC) catalyzes the carboxylation of biotin on its carrier protein (BCCP) and then the CO(2) group is transferred by the transcarboxylase to acetyl-CoA to form malonyl-CoA. In Escherichia coli O6:H1 (strain CFT073 / ATCC 700928 / UPEC), this protein is Acetyl-coenzyme A carboxylase carboxyl transferase subunit beta.